Here is a 349-residue protein sequence, read N- to C-terminus: Polyamine aminopropyltransferase 2 (349 aa).

The PABS domain occupies 29 to 267; it reads DGAITAIEDS…SSWGFLLASD (239 aa). Glutamine 60 is a binding site for S-methyl-5'-thioadenosine. Histidine 91 and glutamate 115 together coordinate spermidine. S-methyl-5'-thioadenosine is bound by residues aspartate 135 and 167-168; that span reads DG. Aspartate 185 (proton acceptor) is an active-site residue. Residue proline 194 coordinates S-methyl-5'-thioadenosine.

Belongs to the spermidine/spermine synthase family. In terms of assembly, homodimer or homotetramer.

It localises to the cytoplasm. It carries out the reaction S-adenosyl 3-(methylsulfanyl)propylamine + putrescine = S-methyl-5'-thioadenosine + spermidine + H(+). It participates in amine and polyamine biosynthesis; spermidine biosynthesis; spermidine from putrescine: step 1/1. Catalyzes the irreversible transfer of a propylamine group from the amino donor S-adenosylmethioninamine (decarboxy-AdoMet) to putrescine (1,4-diaminobutane) to yield spermidine. This chain is Polyamine aminopropyltransferase 2, found in Pseudomonas aeruginosa (strain ATCC 15692 / DSM 22644 / CIP 104116 / JCM 14847 / LMG 12228 / 1C / PRS 101 / PAO1).